The chain runs to 603 residues: Protein US26 (603 aa).

Positions 496–513 are enriched in acidic residues; the sequence is EEEDQEEDDTSDDDDQEK. Disordered stretches follow at residues 496 to 536 and 549 to 568; these read EEED…GSLE and AVAE…DTAQ. Polar residues predominate over residues 517–533; sequence NPQNNIGSLTRTPSSPG.

This sequence belongs to the herpesviridae US22 family.

This is Protein US26 (US26) from Human cytomegalovirus (strain Merlin) (HHV-5).